The sequence spans 240 residues: MGLELYLDLLSQPCRAVYIFAKKNDIPFELRIVDLIKGQHLSDAFAQVNPLKKVPALKDGDFTLTESVAILLYLTRKYKVPDYWYPQDLQARARVDEYLAWQHTTLRRSCLRALWHKVMFPVFLGEPVSPQTLAATLAELDVTLQLLEDKFLQNKAFLTGPHISLADLVAITELMHPVGAGCQVFEGRPKLATWRQRVEAAVGEDLFQEAHEVILKAKDFPPADPTIKQKLMPWVLAMIR.

In terms of domain architecture, GST N-terminal spans 2–82 (GLELYLDLLS…YLTRKYKVPD (81 aa)). Residues His40, 53–54 (KV), and 66–67 (ES) each bind glutathione. The region spanning 88–220 (DLQARARVDE…HEVILKAKDF (133 aa)) is the GST C-terminal domain.

Belongs to the GST superfamily. Theta family. Homodimer. As to expression, found in erythrocyte. Expressed at low levels in liver. In lung, expressed at low levels in club cells and ciliated cells at the alveolar/bronchiolar junction. Absent from epithelial cells of larger bronchioles.

Its subcellular location is the cytoplasm. It carries out the reaction RX + glutathione = an S-substituted glutathione + a halide anion + H(+). In terms of biological role, conjugation of reduced glutathione to a wide number of exogenous and endogenous hydrophobic electrophiles. Acts on 1,2-epoxy-3-(4-nitrophenoxy)propane, phenethylisothiocyanate 4-nitrobenzyl chloride and 4-nitrophenethyl bromide. Displays glutathione peroxidase activity with cumene hydroperoxide. This chain is Glutathione S-transferase theta-1 (GSTT1), found in Homo sapiens (Human).